A 461-amino-acid chain; its full sequence is Trimethylamine monooxygenase (461 aa).

FAD is bound by residues S14, E39, K40, Q41, M47, W48, and H64. The NADP(+) site is built by W72 and N74. Residues N74 and A127 each contribute to the FAD site. NADP(+) is bound by residues S206, S207, S209, R230, and T231. Residues Q319 and T322 each contribute to the FAD site. Position 413 (R413) interacts with NADP(+).

It belongs to the FMO family. FAD is required as a cofactor.

It catalyses the reaction trimethylamine + NADPH + O2 = trimethylamine N-oxide + NADP(+) + H2O. Its function is as follows. Catalyzes the oxidation of trimethylamine (TMA) to produce trimethylamine N-oxide (TMAO). The produced TMAO is accumulated in the cell, functioning as a piezolyte, improving both growth and survival at high hydrostatic pressure (HHP). The sequence is that of Trimethylamine monooxygenase from Myroides profundi.